Reading from the N-terminus, the 504-residue chain is ATP synthase subunit alpha (504 aa).

Residue 169–176 (GDRQTGKT) participates in ATP binding.

This sequence belongs to the ATPase alpha/beta chains family. In terms of assembly, F-type ATPases have 2 components, CF(1) - the catalytic core - and CF(0) - the membrane proton channel. CF(1) has five subunits: alpha(3), beta(3), gamma(1), delta(1), epsilon(1). CF(0) has three main subunits: a(1), b(2) and c(9-12). The alpha and beta chains form an alternating ring which encloses part of the gamma chain. CF(1) is attached to CF(0) by a central stalk formed by the gamma and epsilon chains, while a peripheral stalk is formed by the delta and b chains.

The protein localises to the cell membrane. It carries out the reaction ATP + H2O + 4 H(+)(in) = ADP + phosphate + 5 H(+)(out). Functionally, produces ATP from ADP in the presence of a proton gradient across the membrane. The alpha chain is a regulatory subunit. In Clostridium botulinum (strain Eklund 17B / Type B), this protein is ATP synthase subunit alpha.